Consider the following 301-residue polypeptide: D-psicose 3-epimerase (301 aa).

Residue Y16 coordinates substrate. E162 functions as the Proton donor/acceptor in the catalytic mechanism. E162 lines the Mn(2+) pocket. Residues E168 and 195-198 (DTFH) each bind substrate. Mn(2+)-binding residues include D195 and H221. Residue R227 coordinates substrate. The Proton donor/acceptor role is filled by E256. E256 lines the Mn(2+) pocket.

The protein belongs to the hyi family. Homotetramer. Requires Mn(2+) as cofactor. Co(2+) serves as cofactor.

The catalysed reaction is D-allulose = keto-D-fructose. Completely inhibited by EDTA and partially inhibited by Zn(2+), Mg(2+) and Cu(2+). Functionally, involved in the biosynthesis of D-psicose. Catalyzes the reversible epimerization of D-fructose at the C3 position to yield D-psicose. The enzyme is highly specific for D-psicose and shows very low activity with D-tagatose. The polypeptide is D-psicose 3-epimerase (Enterocloster bolteae (strain ATCC BAA-613 / DSM 15670 / CCUG 46953 / JCM 12243 / WAL 16351) (Clostridium bolteae)).